A 697-amino-acid polypeptide reads, in one-letter code: Sodium-dependent phosphate transport protein 2B (697 aa).

The disordered stretch occupies residues 1 to 45; that stretch reads MAPWPELENAQPNPGKFIEGASGPQSSIPAKDKEASKTNDNGTPV. At 1–91 the chain is on the cytoplasmic side; it reads MAPWPELENA…WSERDTKGKT (91 aa). A helical transmembrane segment spans residues 92 to 112; it reads LCIFQGVGKFILLLGFLYLFV. Residues 113–136 lie on the Extracellular side of the membrane; the sequence is CSLDVLSSAFQLVGGKVAGQFFSN. A helical transmembrane segment spans residues 137-157; sequence NSIMSNPVAGLVIGVLVTVMV. The Cytoplasmic portion of the chain corresponds to 158–213; it reads QSSSTSSSIIVSMVASSLLTVRAAIPIIMGANIGTSITNTIVALMQAGDRNEFRRA. The chain crosses the membrane as a helical span at residues 214–234; sequence FAGATVHDFFNWLSVFVLLPL. Topologically, residues 235–363 are extracellular; that stretch reads EAATHYLEIL…FVNFSLPDLA (129 aa). Asparagine 295, asparagine 308, asparagine 321, and asparagine 356 each carry an N-linked (GlcNAc...) asparagine glycan. Cysteine 303 and cysteine 350 are disulfide-bonded. A helical membrane pass occupies residues 364–384; that stretch reads VGIILLTVSLVVLCGCLIMIV. Topologically, residues 385 to 408 are cytoplasmic; it reads KLLGSVLRGQVATVIKKTLNTDFP. Residues 409 to 429 form a helical membrane-spanning segment; sequence FPFAWLTGYLAILVGAGMTFI. The Extracellular segment spans residues 430-486; it reads VQSSSVFTSAMTPLIGIGVISIERAYPLTLGSNIGTTTTAILAALASPGNTLRSSLQ. A helical transmembrane segment spans residues 487–507; the sequence is IALCHFFFNISGILLWYPIPF. The Cytoplasmic segment spans residues 508–526; sequence TRLPIRLAKGLGNISAKYR. A helical transmembrane segment spans residues 527-547; it reads WFAVFYLIFFFFVTPLTVFGL. Topologically, residues 548 to 551 are extracellular; that stretch reads SLAG. A helical membrane pass occupies residues 552–572; the sequence is WPVLVGVGVPIILLLLLVLCL. At 573–696 the chain is on the cytoplasmic side; that stretch reads RMLQFRCPRI…SMKALSNTTV (124 aa).

Belongs to the SLC34A transporter family. In terms of tissue distribution, highly abundant in the ileum of small intestine, whereas it is almost absent in the duodenum and in the jejunum.

The protein resides in the apical cell membrane. The enzyme catalyses 3 Na(+)(out) + phosphate(out) = 3 Na(+)(in) + phosphate(in). Its function is as follows. Involved in actively transporting phosphate into cells via Na(+) cotransport. The polypeptide is Sodium-dependent phosphate transport protein 2B (Slc34a2) (Mus musculus (Mouse)).